Consider the following 693-residue polypeptide: Golgin subfamily A member 6C (693 aa).

Disordered regions lie at residues 20–71 (NKLA…DSQY), 497–547 (LPGE…GTEQ), and 629–693 (NPAD…MQDT). Residues 73–611 (ELAVALESSS…KLLELQELVL (539 aa)) adopt a coiled-coil conformation. The span at 537-547 (LPKEKADGTEQ) shows a compositional bias: basic and acidic residues. Residues 679 to 693 (PVQQIVQLSPVMQDT) show a composition bias toward polar residues.

Belongs to the GOLGA6 family.

In Homo sapiens (Human), this protein is Golgin subfamily A member 6C (GOLGA6C).